A 390-amino-acid chain; its full sequence is Putative nickel insertion protein (390 aa).

This sequence belongs to the LarC family.

In Geobacter metallireducens (strain ATCC 53774 / DSM 7210 / GS-15), this protein is Putative nickel insertion protein.